A 275-amino-acid polypeptide reads, in one-letter code: Ribosomal RNA small subunit methyltransferase A (275 aa).

Residues Asn-15, Leu-17, Gly-42, Glu-63, Asp-88, and Asn-111 each contribute to the S-adenosyl-L-methionine site.

This sequence belongs to the class I-like SAM-binding methyltransferase superfamily. rRNA adenine N(6)-methyltransferase family. RsmA subfamily.

Its subcellular location is the cytoplasm. The catalysed reaction is adenosine(1518)/adenosine(1519) in 16S rRNA + 4 S-adenosyl-L-methionine = N(6)-dimethyladenosine(1518)/N(6)-dimethyladenosine(1519) in 16S rRNA + 4 S-adenosyl-L-homocysteine + 4 H(+). Specifically dimethylates two adjacent adenosines (A1518 and A1519) in the loop of a conserved hairpin near the 3'-end of 16S rRNA in the 30S particle. May play a critical role in biogenesis of 30S subunits. The chain is Ribosomal RNA small subunit methyltransferase A from Geobacter metallireducens (strain ATCC 53774 / DSM 7210 / GS-15).